Consider the following 217-residue polypeptide: MDINDISKAVEAVKQSSPQRKFEESVEIAINLKDIDMTNPKNRINEEILLPNGRGKDVKVVIFGSEELKAKAKGVADYIFGPEDISKFAEDKKAFKKIVNDAYFFIAEATLMANIGKSLGQVLGPRGKMPRPIPPGQDPVPLIKALKNTVKARSRNSLTLHVPVGTRSMDTQKISENIMAILNRITGKLERGHSNIKNVYVKTTMGKAVQVGTGDQN.

The protein belongs to the universal ribosomal protein uL1 family. Part of the 50S ribosomal subunit.

In terms of biological role, binds directly to 23S rRNA. Probably involved in E site tRNA release. Functionally, protein L1 is also a translational repressor protein, it controls the translation of its operon by binding to its mRNA. In Thermoplasma volcanium (strain ATCC 51530 / DSM 4299 / JCM 9571 / NBRC 15438 / GSS1), this protein is Large ribosomal subunit protein uL1.